Here is a 115-residue protein sequence, read N- to C-terminus: Superoxide reductase (115 aa).

Fe cation-binding residues include E14, H16, H41, H47, C102, and H105.

It belongs to the desulfoferrodoxin family. In terms of assembly, homotetramer. The cofactor is Fe cation.

The catalysed reaction is reduced [rubredoxin] + superoxide + 2 H(+) = oxidized [rubredoxin] + H2O2. Functionally, uses electrons from reduced NADP, by way of rubredoxin and an oxidoreductase, to catalyze the reduction of superoxide to hydrogen peroxide. In Thermococcus kodakarensis (strain ATCC BAA-918 / JCM 12380 / KOD1) (Pyrococcus kodakaraensis (strain KOD1)), this protein is Superoxide reductase (sorA).